The sequence spans 477 residues: Tyrosine-protein kinase transforming protein Fes (477 aa).

Residues 49–76 (GEPPPVLLLQDDRHSTSSSEQEREGGRT) are disordered. Positions 58 to 74 (QDDRHSTSSSEQEREGG) are enriched in basic and acidic residues. One can recognise an SH2 domain in the interval 115 to 204 (WYHGALPRAE…KSGIVLNRAV (90 aa)). Residues 216 to 477 (LVLGEQIGRG…ELQSIRKRHR (262 aa)) enclose the Protein kinase domain. ATP-binding positions include 222 to 230 (IGRGNFGEV) and Lys-245. Catalysis depends on Asp-338, which acts as the Proton acceptor. Tyr-368 carries the phosphotyrosine; by autocatalysis modification.

It belongs to the protein kinase superfamily. Tyr protein kinase family. Fes/fps subfamily.

It catalyses the reaction L-tyrosyl-[protein] + ATP = O-phospho-L-tyrosyl-[protein] + ADP + H(+). The chain is Tyrosine-protein kinase transforming protein Fes (V-FES) from Feline sarcoma virus (strain Snyder-Theilen).